The primary structure comprises 456 residues: Putative dihydroorotase (456 aa).

It belongs to the metallo-dependent hydrolases superfamily. DHOase family. Class I DHOase subfamily.

It carries out the reaction (S)-dihydroorotate + H2O = N-carbamoyl-L-aspartate + H(+). It participates in pyrimidine metabolism; UMP biosynthesis via de novo pathway; (S)-dihydroorotate from bicarbonate: step 3/3. Catalyzes the reversible cyclization of carbamoyl aspartate to dihydroorotate. The sequence is that of Putative dihydroorotase from Rhodopirellula baltica (strain DSM 10527 / NCIMB 13988 / SH1).